The chain runs to 54 residues: Photoreceptor disk component PRCD (54 aa).

Residue Cys-2 is the site of S-palmitoyl cysteine attachment. The disordered stretch occupies residues 24–54; that stretch reads QPEPNGVDGAVSGSSLETDLQSSGREKEPLK. Polar residues predominate over residues 35 to 46; it reads SGSSLETDLQSS.

This sequence belongs to the PRCD family. Interacts with RHO/rhodopsin; the interaction promotes PRCD stability. Post-translationally, palmitoylated at Cys-2. Palmitoylation is essential for protein stability and trafficking to the photoreceptor outer segment, but does not appear to be essential for membrane localization. Probably palmitoylated by ZDHHC3. Phosphorylated. Expressed in retina (at protein level).

The protein resides in the cell projection. Its subcellular location is the cilium. It is found in the photoreceptor outer segment. It localises to the membrane. The protein localises to the endoplasmic reticulum. The protein resides in the golgi apparatus. Involved in vision. The protein is Photoreceptor disk component PRCD of Bos taurus (Bovine).